We begin with the raw amino-acid sequence, 224 residues long: Lipoprotein-releasing system ATP-binding protein LolD (224 aa).

One can recognise an ABC transporter domain in the interval Y4–E224. G40–T47 contacts ATP.

This sequence belongs to the ABC transporter superfamily. Lipoprotein translocase (TC 3.A.1.125) family. As to quaternary structure, the complex is composed of two ATP-binding proteins (LolD) and two transmembrane proteins (LolC and LolE).

The protein resides in the cell inner membrane. Part of the ABC transporter complex LolCDE involved in the translocation of mature outer membrane-directed lipoproteins, from the inner membrane to the periplasmic chaperone, LolA. Responsible for the formation of the LolA-lipoprotein complex in an ATP-dependent manner. This Desulfotalea psychrophila (strain LSv54 / DSM 12343) protein is Lipoprotein-releasing system ATP-binding protein LolD.